The primary structure comprises 920 residues: Isoleucine--tRNA ligase (920 aa).

A 'HIGH' region motif is present at residues 58–68 (PYANGHLHLGH). An L-isoleucyl-5'-AMP-binding site is contributed by E569. The 'KMSKS' region signature appears at 610–614 (KMSKS). K613 serves as a coordination point for ATP. Zn(2+) is bound by residues C895, C898, C910, and C913.

This sequence belongs to the class-I aminoacyl-tRNA synthetase family. IleS type 1 subfamily. In terms of assembly, monomer. Zn(2+) is required as a cofactor.

The protein resides in the cytoplasm. The enzyme catalyses tRNA(Ile) + L-isoleucine + ATP = L-isoleucyl-tRNA(Ile) + AMP + diphosphate. Its function is as follows. Catalyzes the attachment of isoleucine to tRNA(Ile). As IleRS can inadvertently accommodate and process structurally similar amino acids such as valine, to avoid such errors it has two additional distinct tRNA(Ile)-dependent editing activities. One activity is designated as 'pretransfer' editing and involves the hydrolysis of activated Val-AMP. The other activity is designated 'posttransfer' editing and involves deacylation of mischarged Val-tRNA(Ile). This Helicobacter pylori (strain P12) protein is Isoleucine--tRNA ligase.